The primary structure comprises 539 residues: Netrin-G1 (539 aa).

The first 28 residues, 1-28, serve as a signal peptide directing secretion; it reads MYLSRFLSIHALWVTVSSVMQPYPLVWG. 3 disulfides stabilise this stretch: cysteine 33–cysteine 50, cysteine 72–cysteine 92, and cysteine 80–cysteine 88. One can recognise a Laminin N-terminal domain in the interval 46 to 296; that stretch reads DYMACQPEST…AISDIKVRGR (251 aa). The segment at 80–91 is NGL discriminant loop I; sequence CAMGNPYMCNNE. N-linked (GlcNAc...) asparagine glycosylation occurs at asparagine 133. Cysteine 182 and cysteine 206 are oxidised to a cystine. The interval 208–214 is NGL discriminant loop II; the sequence is EEYSTGY. The tract at residues 273–275 is NGL discriminant loop III; the sequence is EIF. 15 cysteine pairs are disulfide-bonded: cysteine 297-cysteine 306, cysteine 299-cysteine 315, cysteine 317-cysteine 326, cysteine 329-cysteine 354, cysteine 364-cysteine 373, cysteine 366-cysteine 384, cysteine 387-cysteine 396, cysteine 399-cysteine 417, cysteine 420-cysteine 432, cysteine 422-cysteine 438, cysteine 440-cysteine 449, cysteine 452-cysteine 462, cysteine 467-cysteine 480, cysteine 474-cysteine 486, and cysteine 488-cysteine 497. Laminin EGF-like domains follow at residues 297–356, 364–419, and 420–469; these read CKCN…TCIP, CECF…VCIE, and CYCN…VCDN. A glycan (N-linked (GlcNAc...) asparagine) is linked at asparagine 320. Asparagine 406 carries N-linked (GlcNAc...) asparagine glycosylation. The N-linked (GlcNAc...) asparagine glycan is linked to asparagine 433. The GPI-anchor amidated serine moiety is linked to residue serine 510. A propeptide spans 511–539 (removed in mature form); it reads DSGQGAPPHGSPALLLLTTLLGTASPLVF.

In terms of assembly, interacts with NGL1. In terms of processing, N-glycosylated. Highly expressed in the thalamus, with very low expression, if any, in other tissues.

It is found in the cell membrane. In terms of biological role, involved in controlling patterning and neuronal circuit formation at the laminar, cellular, subcellular and synaptic levels. Promotes neurite outgrowth of both axons and dendrites. In Homo sapiens (Human), this protein is Netrin-G1 (NTNG1).